The sequence spans 496 residues: MASEKSHKVHPPLHFILFPFMAQGHMIPMIDIARLLAQRGATVTIVTTRYNAGRFENVLSRAMESGLPINIVHVNFPYQEFGLPEGKENIDSYDSMELMVPFFQAVNMLEDPVMKLMEEMKPRPSCIISDLLLPYTSKIARKFSIPKIVFHGTGCFNLLCMHVLRRNLEILKNLKSDKDYFLVPSFPDRVEFTKPQVPVETTASGDWKAFLDEMVEAEYTSYGVIVNTFQELEPAYVKDYTKARAGKVWSIGPVSLCNKAGADKAERGNQAAIDQDECLQWLDSKEDGSVLYVCLGSICNLPLSQLKELGLGLEKSQRSFIWVIRGWEKYNELYEWMMESGFEERIKERGLLIKGWSPQVLILSHPSVGGFLTHCGWNSTLEGITSGIPLITWPLFGDQFCNQKLVVQVLKAGVSAGVEEVMKWGEEEKIGVLVDKEGVKKAVEELMGASDDAKERRRRVKELGESAHKAVEEGGSSHSNITYLLQDIMQQVKSKN.

Residues Ser297, 357 to 359, 374 to 382, and 396 to 399 each bind UDP-alpha-D-glucose; these read SPQ, HCGWNSTLE, and FGDQ. Residues 450–475 are disordered; it reads SDDAKERRRRVKELGESAHKAVEEGG. The span at 451-472 shows a compositional bias: basic and acidic residues; that stretch reads DDAKERRRRVKELGESAHKAVE.

Belongs to the UDP-glycosyltransferase family.

The protein is UDP-glycosyltransferase 73C4 (UGT73C4) of Arabidopsis thaliana (Mouse-ear cress).